The chain runs to 37 residues: M-oxotoxin-Ot2b (37 aa).

Expressed by the venom gland.

The protein localises to the secreted. Functionally, disrupts biological membranes, particularly those rich in phosphocholine. Has antimicrobial activity against Gram-negative bacterium E.coli, Gram-positive bacteria B.subtilis and S.aureus, and hemolytic activity against sheep, pig and guinea pig red blood cells. Has insecticidal activity against S.frugiperda ovarian cells by opening non-selective ion channels. Enhances the insecticidal activity of spider venom neurotoxic peptides. The protein is M-oxotoxin-Ot2b of Oxyopes takobius (Lynx spider).